Consider the following 95-residue polypeptide: Cell division topological specificity factor (95 aa).

The protein belongs to the MinE family.

Its function is as follows. Prevents the cell division inhibition by proteins MinC and MinD at internal division sites while permitting inhibition at polar sites. This ensures cell division at the proper site by restricting the formation of a division septum at the midpoint of the long axis of the cell. The chain is Cell division topological specificity factor from Psychrobacter cryohalolentis (strain ATCC BAA-1226 / DSM 17306 / VKM B-2378 / K5).